Here is a 252-residue protein sequence, read N- to C-terminus: Type III pantothenate kinase (252 aa).

6–13 contacts ATP; that stretch reads DIGNTNTV. 105-108 serves as a coordination point for substrate; the sequence is GADR. Asp107 serves as the catalytic Proton acceptor. A K(+)-binding site is contributed by Asp127. Thr130 provides a ligand contact to ATP. A substrate-binding site is contributed by Thr182.

It belongs to the type III pantothenate kinase family. In terms of assembly, homodimer. NH4(+) is required as a cofactor. K(+) serves as cofactor.

It localises to the cytoplasm. It carries out the reaction (R)-pantothenate + ATP = (R)-4'-phosphopantothenate + ADP + H(+). It functions in the pathway cofactor biosynthesis; coenzyme A biosynthesis; CoA from (R)-pantothenate: step 1/5. In terms of biological role, catalyzes the phosphorylation of pantothenate (Pan), the first step in CoA biosynthesis. The polypeptide is Type III pantothenate kinase (Salinispora arenicola (strain CNS-205)).